Here is a 163-residue protein sequence, read N- to C-terminus: Calcium-binding protein I (163 aa).

EF-hand domains lie at 20–42, 82–117, and 118–153; these read DKNKDRQYSIDEIVQLLKKNSKN, KPEIDIESFLLRFDKNNDKMISHHELKTKLDELGCG, and NSKKTTDYVFEQIDTNKEGSLSYEDLEGFVKFLKQD. Residues Asp-95, Asn-97, Asp-99, Met-101, Glu-106, Asp-131, Asn-133, Glu-135, Ser-137, and Asp-142 each coordinate Ca(2+).

The sequence is that of Calcium-binding protein I (cbpI) from Dictyostelium discoideum (Social amoeba).